A 296-amino-acid polypeptide reads, in one-letter code: 4-hydroxybenzoate octaprenyltransferase (296 aa).

Helical transmembrane passes span 28–48, 51–71, 102–122, 143–163, 174–194, 212–232, 233–253, and 274–294; these read IGTLLLLWPTYWALWLASDGI, LAVLAAFTIGTFLMRSAGCVI, LLLTAFLCLLAALCLIPLNHL, FFPIPQLYLGLAFSFGIPMAF, AWILFTANVLWTLAYDTVYAM, FGRYDIAAVMLCHGGFTLLMA, VLGAVIGAAWAYWTAIPIVLL, and FLANNRIGWVWFTAIFAHTFF.

It belongs to the UbiA prenyltransferase family. The cofactor is Mg(2+).

The protein localises to the cell inner membrane. The catalysed reaction is all-trans-octaprenyl diphosphate + 4-hydroxybenzoate = 4-hydroxy-3-(all-trans-octaprenyl)benzoate + diphosphate. It participates in cofactor biosynthesis; ubiquinone biosynthesis. Functionally, catalyzes the prenylation of para-hydroxybenzoate (PHB) with an all-trans polyprenyl group. Mediates the second step in the final reaction sequence of ubiquinone-8 (UQ-8) biosynthesis, which is the condensation of the polyisoprenoid side chain with PHB, generating the first membrane-bound Q intermediate 3-octaprenyl-4-hydroxybenzoate. The chain is 4-hydroxybenzoate octaprenyltransferase from Neisseria meningitidis serogroup C (strain 053442).